We begin with the raw amino-acid sequence, 212 residues long: Octanoyltransferase (212 aa).

A BPL/LPL catalytic domain is found at 31–209 (AETQDEIWLV…HFADLLGYNI (179 aa)). Substrate-binding positions include 70–77 (RGGQITYH), 138–140 (SLG), and 151–153 (GLA). The active-site Acyl-thioester intermediate is Cys169.

This sequence belongs to the LipB family.

Its subcellular location is the cytoplasm. The catalysed reaction is octanoyl-[ACP] + L-lysyl-[protein] = N(6)-octanoyl-L-lysyl-[protein] + holo-[ACP] + H(+). It functions in the pathway protein modification; protein lipoylation via endogenous pathway; protein N(6)-(lipoyl)lysine from octanoyl-[acyl-carrier-protein]: step 1/2. Catalyzes the transfer of endogenously produced octanoic acid from octanoyl-acyl-carrier-protein onto the lipoyl domains of lipoate-dependent enzymes. Lipoyl-ACP can also act as a substrate although octanoyl-ACP is likely to be the physiological substrate. This is Octanoyltransferase from Haemophilus influenzae (strain PittGG).